Consider the following 69-residue polypeptide: Cytochrome c oxidase subunit 8A, mitochondrial (69 aa).

Residues Met-1–Gln-25 constitute a mitochondrion transit peptide. Residues Ser-2–Leu-19 carry the SIFI-degron motif. Residues Val-26–Gly-36 lie on the Mitochondrial matrix side of the membrane. Residues Val-37–Ser-60 form a helical membrane-spanning segment. The Mitochondrial intermembrane portion of the chain corresponds to His-61–Gly-69.

The protein belongs to the cytochrome c oxidase VIII family. Component of the cytochrome c oxidase (complex IV, CIV), a multisubunit enzyme composed of 14 subunits. The complex is composed of a catalytic core of 3 subunits MT-CO1, MT-CO2 and MT-CO3, encoded in the mitochondrial DNA, and 11 supernumerary subunits COX4I, COX5A, COX5B, COX6A, COX6B, COX6C, COX7A, COX7B, COX7C, COX8 and NDUFA4, which are encoded in the nuclear genome. The complex exists as a monomer or a dimer and forms supercomplexes (SCs) in the inner mitochondrial membrane with NADH-ubiquinone oxidoreductase (complex I, CI) and ubiquinol-cytochrome c oxidoreductase (cytochrome b-c1 complex, complex III, CIII), resulting in different assemblies (supercomplex SCI(1)III(2)IV(1) and megacomplex MCI(2)III(2)IV(2)). In response to mitochondrial stress, the precursor protein is ubiquitinated by the SIFI complex in the cytoplasm before mitochondrial import, leading to its degradation. Within the SIFI complex, UBR4 initiates ubiquitin chain that are further elongated or branched by KCMF1.

The protein resides in the mitochondrion inner membrane. The protein operates within energy metabolism; oxidative phosphorylation. Functionally, component of the cytochrome c oxidase, the last enzyme in the mitochondrial electron transport chain which drives oxidative phosphorylation. The respiratory chain contains 3 multisubunit complexes succinate dehydrogenase (complex II, CII), ubiquinol-cytochrome c oxidoreductase (cytochrome b-c1 complex, complex III, CIII) and cytochrome c oxidase (complex IV, CIV), that cooperate to transfer electrons derived from NADH and succinate to molecular oxygen, creating an electrochemical gradient over the inner membrane that drives transmembrane transport and the ATP synthase. Cytochrome c oxidase is the component of the respiratory chain that catalyzes the reduction of oxygen to water. Electrons originating from reduced cytochrome c in the intermembrane space (IMS) are transferred via the dinuclear copper A center (CU(A)) of subunit 2 and heme A of subunit 1 to the active site in subunit 1, a binuclear center (BNC) formed by heme A3 and copper B (CU(B)). The BNC reduces molecular oxygen to 2 water molecules using 4 electrons from cytochrome c in the IMS and 4 protons from the mitochondrial matrix. The polypeptide is Cytochrome c oxidase subunit 8A, mitochondrial (COX8A) (Saimiri sciureus (Common squirrel monkey)).